Consider the following 152-residue polypeptide: Aspartate 1-decarboxylase (152 aa).

The Schiff-base intermediate with substrate; via pyruvic acid role is filled by S24. S24 bears the Pyruvic acid (Ser) mark. T56 provides a ligand contact to substrate. Residue Y57 is the Proton donor of the active site. 72-74 (GAA) provides a ligand contact to substrate.

The protein belongs to the PanD family. Heterooctamer of four alpha and four beta subunits. Requires pyruvate as cofactor. Is synthesized initially as an inactive proenzyme, which is activated by self-cleavage at a specific serine bond to produce a beta-subunit with a hydroxyl group at its C-terminus and an alpha-subunit with a pyruvoyl group at its N-terminus.

The protein localises to the cytoplasm. It catalyses the reaction L-aspartate + H(+) = beta-alanine + CO2. Its pathway is cofactor biosynthesis; (R)-pantothenate biosynthesis; beta-alanine from L-aspartate: step 1/1. Its function is as follows. Catalyzes the pyruvoyl-dependent decarboxylation of aspartate to produce beta-alanine. This is Aspartate 1-decarboxylase from Methylobacterium nodulans (strain LMG 21967 / CNCM I-2342 / ORS 2060).